A 185-amino-acid chain; its full sequence is uncharacterized protein (185 aa).

2 consecutive transmembrane segments (helical) span residues 1 to 19 (MLNIVLIIGLLAIFNTSSA) and 105 to 125 (AGFIAQCIIFLFVYTIVTMDV).

The protein resides in the membrane. This is an uncharacterized protein from Caenorhabditis elegans.